Reading from the N-terminus, the 177-residue chain is Ecotin (177 aa).

The N-terminal stretch at 1–23 is a signal peptide; the sequence is MQASIQNRIFFGLVVLWSTTVLE. An intrachain disulfide couples cysteine 83 to cysteine 122.

Belongs to the protease inhibitor I11 (ecotin) family. As to quaternary structure, homodimer.

The protein localises to the periplasm. Functionally, general inhibitor of family S1 serine proteases. The sequence is that of Ecotin from Prochlorococcus marinus (strain MIT 9313).